The sequence spans 312 residues: Ribosomal RNA small subunit methyltransferase H (312 aa).

S-adenosyl-L-methionine-binding positions include 35–37 (GGH), D55, F79, D101, and Q108.

It belongs to the methyltransferase superfamily. RsmH family.

It localises to the cytoplasm. The enzyme catalyses cytidine(1402) in 16S rRNA + S-adenosyl-L-methionine = N(4)-methylcytidine(1402) in 16S rRNA + S-adenosyl-L-homocysteine + H(+). Its function is as follows. Specifically methylates the N4 position of cytidine in position 1402 (C1402) of 16S rRNA. The protein is Ribosomal RNA small subunit methyltransferase H of Glaesserella parasuis serovar 5 (strain SH0165) (Haemophilus parasuis).